A 661-amino-acid polypeptide reads, in one-letter code: Putative core protein L410 (661 aa).

A compositionally biased stretch (basic and acidic residues) spans 1–11 (MADNKGRRDTF). Positions 1-26 (MADNKGRRDTFDVSGDTNTNATSNKR) are disordered. The span at 15–25 (GDTNTNATSNK) shows a compositional bias: polar residues. Positions 112 to 140 (KKENKWSDKEYDEFRKELTNLLTGNRALE) form a coiled coil.

It is found in the virion. The sequence is that of Putative core protein L410 from Acanthamoeba polyphaga (Amoeba).